The chain runs to 639 residues: Cystathionine gamma-synthase (639 aa).

Lys443 carries the post-translational modification N6-(pyridoxal phosphate)lysine.

This sequence belongs to the trans-sulfuration enzymes family. MET7 subfamily. Pyridoxal 5'-phosphate serves as cofactor.

It localises to the cytoplasm. The protein localises to the nucleus. The enzyme catalyses O-succinyl-L-homoserine + L-cysteine = L,L-cystathionine + succinate + H(+). The protein operates within amino-acid biosynthesis; L-methionine biosynthesis via de novo pathway; L-cystathionine from O-succinyl-L-homoserine: step 1/1. In terms of biological role, catalyzes the formation of L-cystathionine from O-succinyl-L-homoserine (OSHS) and L-cysteine, via a gamma-replacement reaction. In the absence of thiol, catalyzes gamma-elimination to form 2-oxobutanoate, succinate and ammonia. This chain is Cystathionine gamma-synthase, found in Saccharomyces cerevisiae (strain ATCC 204508 / S288c) (Baker's yeast).